The primary structure comprises 302 residues: MRIVLITGISGSGKSVALNALEDAGYYCVDNLPPHVLPELARYLAQDGQRRLAVAIDARSSASLDEMPGLIRELSREHDVRVLFLNASTQALIQRFSETRRRHPLSGSLSHDADVGLLSSLEEAIERERELVAPLAEFGHQIDTSTLRANALRTWVKRFIEQKNNDLMVMFESFGFKRGVPLDADLMFDVRALPNPYYDHQLRPLTGLDQPVIAFLDALPIVHQMIDDIHAFLMKWLPHFRDDNRSYLTVAIGCTGGQHRSVFIAETLAARLAREANVIVRHRDAPVDVDASSRLVSEVDRP.

G8–S15 contributes to the ATP binding site. Position 57–60 (D57–S60) interacts with GTP.

This sequence belongs to the RapZ-like family.

Displays ATPase and GTPase activities. The chain is Nucleotide-binding protein BceJ2315_08000 from Burkholderia cenocepacia (strain ATCC BAA-245 / DSM 16553 / LMG 16656 / NCTC 13227 / J2315 / CF5610) (Burkholderia cepacia (strain J2315)).